Here is a 250-residue protein sequence, read N- to C-terminus: Small ribosomal subunit protein uS2 (250 aa).

The protein belongs to the universal ribosomal protein uS2 family.

The protein is Small ribosomal subunit protein uS2 of Marinobacter nauticus (strain ATCC 700491 / DSM 11845 / VT8) (Marinobacter aquaeolei).